We begin with the raw amino-acid sequence, 507 residues long: Microcystinase C (507 aa).

An N-terminal signal peptide occupies residues 1 to 21 (MLDRRTLMGGILSMAGSKATG). Zn(2+) is bound by residues aspartate 167, histidine 169, and histidine 191.

This sequence belongs to the peptidase M81 family. Zn(2+) serves as cofactor.

Its activity is regulated as follows. Inhibited by the metal chelators EDTA and 1,10-phenanthroline. Involved in peptidolytic degradation of cyclic heptapeptide hepatotoxin microcystin (MC). Cleaves both linear MC and the tetrapeptide degradation product of MC. Cleaves the Adda-Glu peptide bond of linear MC heptapeptides. The polypeptide is Microcystinase C (Sphingomonas sp).